A 421-amino-acid polypeptide reads, in one-letter code: Hemagglutinin-esterase (421 aa).

An N-terminal signal peptide occupies residues 1–16; sequence MFLLPRFILVSCIIGS. The segment at 7–127 is esterase domain 1; that stretch reads FILVSCIIGS…SNDIWMQNKG (121 aa). Topologically, residues 17–392 are virion surface; that stretch reads LGFDNPPTNV…PICVYDPLPL (376 aa). S40 functions as the Nucleophile in the catalytic mechanism. An intrachain disulfide couples C44 to C65. N-linked (GlcNAc...) asparagine; by host glycans are attached at residues N54, N89, N153, N236, and N301. 3 disulfide bridges follow: C113-C162, C197-C276, and C205-C249. Positions 128 to 266 are receptor binding; sequence LFYTQVYKNM…GNYLAISNEL (139 aa). An esterase domain 2 region spans residues 267–379; it reads LLTVPTKAIC…RCPTAADINT (113 aa). An intrachain disulfide couples C307 to C312. N316 is a glycosylation site (N-linked (GlcNAc...) asparagine; by host). Catalysis depends on charge relay system residues D326 and H329. Cysteines 347 and 371 form a disulfide. N-linked (GlcNAc...) asparagine; by host glycosylation is present at N358. Residues 393–413 form a helical membrane-spanning segment; sequence ILLGILLGVAVIIIVVLLLYF. Residues 414–421 are Intravirion-facing; sequence MVENGTRL. N-linked (GlcNAc...) asparagine; by host glycosylation occurs at N417.

The protein belongs to the influenza type C/coronaviruses hemagglutinin-esterase family. Homodimer; disulfide-linked. Forms a complex with the M protein in the pre-Golgi. Associates then with S-M complex to form a ternary complex S-M-HE. In terms of processing, N-glycosylated in the host RER.

It localises to the virion membrane. It is found in the host cell membrane. It carries out the reaction N-acetyl-9-O-acetylneuraminate + H2O = N-acetylneuraminate + acetate + H(+). It catalyses the reaction N-acetyl-4-O-acetylneuraminate + H2O = N-acetylneuraminate + acetate + H(+). Structural protein that makes short spikes at the surface of the virus. Contains receptor binding and receptor-destroying activities. Mediates de-O-acetylation of N-acetyl-4-O-acetylneuraminic acid, which is probably the receptor determinant recognized by the virus on the surface of erythrocytes and susceptible cells. This receptor-destroying activity is important for virus release as it probably helps preventing self-aggregation and ensures the efficient spread of the progeny virus from cell to cell. May serve as a secondary viral attachment protein for initiating infection, the spike protein being the major one. May become a target for both the humoral and the cellular branches of the immune system. The protein is Hemagglutinin-esterase of Bos taurus (Bovine).